A 179-amino-acid polypeptide reads, in one-letter code: Inner membrane-spanning protein YciB (179 aa).

The next 5 helical transmembrane spans lie at 22–42 (IYAA…YSWV), 50–70 (MALI…FFHN), 76–96 (WKVT…QWVM), 121–141 (LAWA…AFWL), and 149–169 (FKVF…GVYI).

Belongs to the YciB family.

It is found in the cell inner membrane. Plays a role in cell envelope biogenesis, maintenance of cell envelope integrity and membrane homeostasis. The protein is Inner membrane-spanning protein YciB of Salmonella dublin (strain CT_02021853).